The following is a 132-amino-acid chain: Telomere bouquet protein 1 (132 aa).

Interacts with bqt2 and sad1. The bqt1-bqt2-sad1 complex binds rap1.

It is found in the cytoplasm. The protein localises to the cytoskeleton. The protein resides in the microtubule organizing center. Its subcellular location is the spindle pole body. It localises to the chromosome. It is found in the telomere. Involved in chromosome segregation. During meiotic prophase, connects telomeres to the spindle pole body by forming a bridge between the telomere protein rap1 and the spindle pole body protein sad1. This is Telomere bouquet protein 1 (bqt1) from Schizosaccharomyces pombe (strain 972 / ATCC 24843) (Fission yeast).